A 155-amino-acid chain; its full sequence is Large ribosomal subunit protein bL9c (155 aa).

It belongs to the bacterial ribosomal protein bL9 family.

Its subcellular location is the plastid. The protein resides in the chloroplast. Functionally, binds to the 23S rRNA. The sequence is that of Large ribosomal subunit protein bL9c from Pyropia yezoensis (Susabi-nori).